Reading from the N-terminus, the 427-residue chain is Glutamate-1-semialdehyde 2,1-aminomutase (427 aa).

Lysine 265 is subject to N6-(pyridoxal phosphate)lysine.

Belongs to the class-III pyridoxal-phosphate-dependent aminotransferase family. HemL subfamily. Homodimer. Requires pyridoxal 5'-phosphate as cofactor.

Its subcellular location is the cytoplasm. It carries out the reaction (S)-4-amino-5-oxopentanoate = 5-aminolevulinate. It participates in porphyrin-containing compound metabolism; protoporphyrin-IX biosynthesis; 5-aminolevulinate from L-glutamyl-tRNA(Glu): step 2/2. This Pseudomonas syringae pv. syringae (strain B728a) protein is Glutamate-1-semialdehyde 2,1-aminomutase.